A 406-amino-acid polypeptide reads, in one-letter code: 4-hydroxy-3-methylbut-2-en-1-yl diphosphate synthase (ferredoxin) (406 aa).

Residues Cys-313, Cys-316, Cys-347, and Glu-354 each contribute to the [4Fe-4S] cluster site.

It belongs to the IspG family. The cofactor is [4Fe-4S] cluster.

The enzyme catalyses (2E)-4-hydroxy-3-methylbut-2-enyl diphosphate + 2 oxidized [2Fe-2S]-[ferredoxin] + H2O = 2-C-methyl-D-erythritol 2,4-cyclic diphosphate + 2 reduced [2Fe-2S]-[ferredoxin] + H(+). Its pathway is isoprenoid biosynthesis; isopentenyl diphosphate biosynthesis via DXP pathway; isopentenyl diphosphate from 1-deoxy-D-xylulose 5-phosphate: step 5/6. In terms of biological role, converts 2C-methyl-D-erythritol 2,4-cyclodiphosphate (ME-2,4cPP) into 1-hydroxy-2-methyl-2-(E)-butenyl 4-diphosphate. The polypeptide is 4-hydroxy-3-methylbut-2-en-1-yl diphosphate synthase (ferredoxin) (Picosynechococcus sp. (strain ATCC 27264 / PCC 7002 / PR-6) (Agmenellum quadruplicatum)).